The primary structure comprises 188 residues: Elongation factor P (188 aa).

Lysine 34 is subject to N6-(3,6-diaminohexanoyl)-5-hydroxylysine.

This sequence belongs to the elongation factor P family. In terms of processing, may be beta-lysylated on the epsilon-amino group of Lys-34 by the combined action of EpmA and EpmB, and then hydroxylated on the C5 position of the same residue by EpmC (if this protein is present). Lysylation is critical for the stimulatory effect of EF-P on peptide-bond formation. The lysylation moiety may extend toward the peptidyltransferase center and stabilize the terminal 3-CCA end of the tRNA. Hydroxylation of the C5 position on Lys-34 may allow additional potential stabilizing hydrogen-bond interactions with the P-tRNA.

Its subcellular location is the cytoplasm. Its pathway is protein biosynthesis; polypeptide chain elongation. Involved in peptide bond synthesis. Alleviates ribosome stalling that occurs when 3 or more consecutive Pro residues or the sequence PPG is present in a protein, possibly by augmenting the peptidyl transferase activity of the ribosome. Modification of Lys-34 is required for alleviation. In Sodalis glossinidius (strain morsitans), this protein is Elongation factor P.